A 461-amino-acid chain; its full sequence is Cysteine--tRNA ligase (461 aa).

Zn(2+) is bound at residue cysteine 28. The short motif at 30–40 (ITVYDLCHIGH) is the 'HIGH' region element. Cysteine 209, histidine 234, and glutamate 238 together coordinate Zn(2+). The 'KMSKS' region signature appears at 266 to 270 (KMSKS). Lysine 269 serves as a coordination point for ATP.

The protein belongs to the class-I aminoacyl-tRNA synthetase family. As to quaternary structure, monomer. Zn(2+) is required as a cofactor.

It localises to the cytoplasm. The catalysed reaction is tRNA(Cys) + L-cysteine + ATP = L-cysteinyl-tRNA(Cys) + AMP + diphosphate. In Pectobacterium carotovorum subsp. carotovorum (strain PC1), this protein is Cysteine--tRNA ligase.